Here is a 33-residue protein sequence, read N- to C-terminus: Dermaseptin-H9 (33 aa).

Residue Leu33 is modified to Leucine amide.

Belongs to the frog skin active peptide (FSAP) family. Dermaseptin subfamily. As to expression, expressed by the skin glands.

Its subcellular location is the secreted. In terms of biological role, has antimicrobial activity. The chain is Dermaseptin-H9 from Pithecopus hypochondrialis (Orange-legged leaf frog).